The primary structure comprises 1080 residues: Kinesin-like protein KIN-14E (1080 aa).

Residues 1-35 (MDFSWTTGWEKAAADDDEAESAPAPAPPAPSPQEA) are disordered. Residues 247–355 (QTRTSKLISK…KQEQTLLSLE (109 aa)) adopt a coiled-coil conformation. Residues 407-729 (NIRVFCRCRP…LNFASRVRRI (323 aa)) enclose the Kinesin motor domain. Position 490–497 (490–497 (GQTGTGKT)) interacts with ATP. Positions 736–893 (KQVDTAELQK…EHHRSVAESK (158 aa)) form a coiled coil. Residues 960 to 970 (AMSEKEQHILR) show a composition bias toward basic and acidic residues. Positions 960–1080 (AMSEKEQHIL…AVNKTRGWVR (121 aa)) are disordered. Residues 971–985 (SSDSMNKKVTNNSSI) show a composition bias toward polar residues. Low complexity predominate over residues 1047 to 1059 (TATSKTAAATHKT).

This sequence belongs to the TRAFAC class myosin-kinesin ATPase superfamily. Kinesin family. KIN-14 subfamily.

In Oryza sativa subsp. japonica (Rice), this protein is Kinesin-like protein KIN-14E.